The sequence spans 580 residues: Putative monoterpene synthase 8 (580 aa).

The N-terminal 44 residues, 1–44, are a transit peptide targeting the chloroplast; that stretch reads MACTSNLSSLSKSWAVLDVPRGAPKATGLWLKRQFIFKTSRICM. Mg(2+)-binding residues include Asp-333, Asp-337, Asp-478, Thr-482, and Glu-486. A DDXXD motif motif is present at residues 333–337; sequence DDIFD.

It belongs to the terpene synthase family. Tpsg subfamily. As to quaternary structure, monomer. Mg(2+) is required as a cofactor. Requires Mn(2+) as cofactor. As to expression, confined to flowers.

It localises to the plastid. The protein resides in the chloroplast. It participates in secondary metabolite biosynthesis; terpenoid biosynthesis. Its function is as follows. Monoterpene synthase (mono-TPS) involved in the biosynthesis of monoterpenes natural products, constituent of coffee beverage aroma. The sequence is that of Putative monoterpene synthase 8 from Coffea arabica (Arabian coffee).